The primary structure comprises 102 residues: Small ribosomal subunit protein uS10 (102 aa).

This sequence belongs to the universal ribosomal protein uS10 family. As to quaternary structure, part of the 30S ribosomal subunit.

Involved in the binding of tRNA to the ribosomes. In Bacillus subtilis (strain 168), this protein is Small ribosomal subunit protein uS10 (rpsJ).